The sequence spans 351 residues: MGHRKLASPRRGSAGLRPRKRSSELLPTPRTWPQINSPNPKLLGFVGYKVGMSHVFMIDDWPNSPTNGKEIYMPVTVLEVPPIIPLALRAYAVDGKGEPNVITEYWSPSSLQFLDITRRIHSFSSFLKNDESKKKFEEKFGSKLDLIKSNLDRIVYFRLLVATQPRKIPSLGKKVPDLVEIQIGGGEKKAQLDYALNVLGKEISIKDVFKEGQLIDVVGVTKGKGFAGVIKRYSVVELPRWHKHRKGSRKIGTRGPSLGTPSYTPQPGQLGFHRRTEYNKRIIKIGDDPKEINPAGGFVRYGIVRNTYILLEGSILGSKKRPIFLREAVRPSYVFENAPKITYVNLLSKQG.

2 disordered regions span residues 1–31 (MGHR…TPRT) and 246–271 (KGSR…GQLG).

This sequence belongs to the universal ribosomal protein uL3 family. As to quaternary structure, part of the 50S ribosomal subunit. Forms a cluster with proteins L14 and L24e.

One of the primary rRNA binding proteins, it binds directly near the 3'-end of the 23S rRNA, where it nucleates assembly of the 50S subunit. The chain is Large ribosomal subunit protein uL3 from Saccharolobus islandicus (strain M.14.25 / Kamchatka #1) (Sulfolobus islandicus).